We begin with the raw amino-acid sequence, 207 residues long: Holliday junction branch migration complex subunit RuvA (207 aa).

The domain I stretch occupies residues 1 to 71; the sequence is MIVSIAGKLV…RLTPRLIGFS (71 aa). Residues 72–149 are domain II; the sequence is TLPERQFFDL…RFALMVAGGE (78 aa). The interval 150-155 is flexible linker; it reads VADAME. The tract at residues 156–207 is domain III; that stretch reads VESPIVSDTYDALVTLGHSESDARKLIDETLATGKKFKDTESLLTAIYQRSK.

The protein belongs to the RuvA family. In terms of assembly, homotetramer. Forms an RuvA(8)-RuvB(12)-Holliday junction (HJ) complex. HJ DNA is sandwiched between 2 RuvA tetramers; dsDNA enters through RuvA and exits via RuvB. An RuvB hexamer assembles on each DNA strand where it exits the tetramer. Each RuvB hexamer is contacted by two RuvA subunits (via domain III) on 2 adjacent RuvB subunits; this complex drives branch migration. In the full resolvosome a probable DNA-RuvA(4)-RuvB(12)-RuvC(2) complex forms which resolves the HJ.

Its subcellular location is the cytoplasm. Its function is as follows. The RuvA-RuvB-RuvC complex processes Holliday junction (HJ) DNA during genetic recombination and DNA repair, while the RuvA-RuvB complex plays an important role in the rescue of blocked DNA replication forks via replication fork reversal (RFR). RuvA specifically binds to HJ cruciform DNA, conferring on it an open structure. The RuvB hexamer acts as an ATP-dependent pump, pulling dsDNA into and through the RuvAB complex. HJ branch migration allows RuvC to scan DNA until it finds its consensus sequence, where it cleaves and resolves the cruciform DNA. This chain is Holliday junction branch migration complex subunit RuvA, found in Rhodopirellula baltica (strain DSM 10527 / NCIMB 13988 / SH1).